Reading from the N-terminus, the 518-residue chain is Cytochrome P450 82E3 (518 aa).

The helical transmembrane segment at 2 to 22 (VFPVEAIVGLVTFTFLFYFLW) threads the bilayer. Lysine 254 participates in a covalent cross-link: Glycyl lysine isopeptide (Lys-Gly) (interchain with G-Cter in ubiquitin). Residue cysteine 458 coordinates heme.

It belongs to the cytochrome P450 family. CYP82E2 subfamily. It depends on heme as a cofactor. Expressed at low levels in green leaves.

The protein resides in the membrane. The protein operates within alkaloid biosynthesis; nicotine biosynthesis. In terms of biological role, no nicotine N-demethylase activity. This is Cytochrome P450 82E3 from Nicotiana tabacum (Common tobacco).